We begin with the raw amino-acid sequence, 559 residues long: Suppressor of tumorigenicity 7 protein-like (559 aa).

The next 3 membrane-spanning stretches (helical) occupy residues 39-59, 83-103, and 513-533; these read GLAN…LYAL, FYVA…IFEW, and LPFF…LAFL.

The protein belongs to the ST7 family. As to expression, ubiquitously expressed.

It is found in the membrane. The polypeptide is Suppressor of tumorigenicity 7 protein-like (St7l) (Mus musculus (Mouse)).